Here is a 354-residue protein sequence, read N- to C-terminus: Isopentenyl-diphosphate delta-isomerase (354 aa).

Position 11 to 12 (11 to 12 (KK)) interacts with substrate. FMN-binding positions include Ser67, 68–70 (SMT), Ser98, and Asn126. 98–100 (SFK) is a binding site for substrate. Residue Gln160 coordinates substrate. Mg(2+) is bound at residue Glu161. FMN is bound by residues Lys192, Thr222, and 289–290 (AA).

It belongs to the IPP isomerase type 2 family. Homooctamer. Dimer of tetramers. FMN serves as cofactor. NADPH is required as a cofactor. The cofactor is Mg(2+).

It localises to the cytoplasm. It catalyses the reaction isopentenyl diphosphate = dimethylallyl diphosphate. Its function is as follows. Involved in the biosynthesis of isoprenoids. Catalyzes the 1,3-allylic rearrangement of the homoallylic substrate isopentenyl (IPP) to its allylic isomer, dimethylallyl diphosphate (DMAPP). This chain is Isopentenyl-diphosphate delta-isomerase, found in Borrelia garinii subsp. bavariensis (strain ATCC BAA-2496 / DSM 23469 / PBi) (Borreliella bavariensis).